The primary structure comprises 371 residues: Phospholipid-transporting ATPase accessory subunit ivn1 (371 aa).

The Cytoplasmic portion of the chain corresponds to 1–39 (MSQTEIVKKPKHKRFKRPDKSRFVQQTLPAWQFIFTPWT). Residues 40-60 (VLPLLFLLGIVFAPLGAGMFV) form a helical membrane-spanning segment. Residues 61–325 (ASRRVKELRI…STTSVIGGKN (265 aa)) are Extracellular-facing. 2 disulfide bridges follow: C75–C111 and C166–C181. N99 carries an N-linked (GlcNAc...) asparagine glycan. N-linked (GlcNAc...) asparagine glycans are attached at residues N190, N212, N216, N233, N284, and N297. The helical transmembrane segment at 326–346 (YFLGILYFVIGGLCAASGVIL) threads the bilayer. Residues 347 to 371 (SIACLIKPRRVGDPRYLSWNRGKSS) are Cytoplasmic-facing.

The protein belongs to the CDC50/LEM3 family.

It localises to the endoplasmic reticulum membrane. Functionally, accessory component of a P4-ATPase flippase complex which catalyzes the hydrolysis of ATP coupled to the transport of aminophospholipids from the lumenal to the cytosolic leaflet of membranes and ensures the maintenance of asymmetric distribution of phospholipids. In Schizosaccharomyces pombe (strain 972 / ATCC 24843) (Fission yeast), this protein is Phospholipid-transporting ATPase accessory subunit ivn1 (ivn1).